The chain runs to 155 residues: uncharacterized protein (155 aa).

The disordered stretch occupies residues M1–L34. Residues Q8–V22 are compositionally biased toward basic and acidic residues. Residues M115–F135 traverse the membrane as a helical segment.

It is found in the membrane. This is an uncharacterized protein from Homo sapiens (Human).